A 423-amino-acid polypeptide reads, in one-letter code: Imidazolonepropionase (423 aa).

2 residues coordinate Fe(3+): H78 and H80. Zn(2+) is bound by residues H78 and H80. 4-imidazolone-5-propanoate contacts are provided by R87, Y150, and H183. Y150 is a binding site for N-formimidoyl-L-glutamate. H247 serves as a coordination point for Fe(3+). Zn(2+) is bound at residue H247. E250 lines the 4-imidazolone-5-propanoate pocket. D322 provides a ligand contact to Fe(3+). D322 is a Zn(2+) binding site. Positions 324 and 326 each coordinate N-formimidoyl-L-glutamate. S327 contacts 4-imidazolone-5-propanoate.

Belongs to the metallo-dependent hydrolases superfamily. HutI family. Zn(2+) serves as cofactor. It depends on Fe(3+) as a cofactor.

It is found in the cytoplasm. It carries out the reaction 4-imidazolone-5-propanoate + H2O = N-formimidoyl-L-glutamate. The protein operates within amino-acid degradation; L-histidine degradation into L-glutamate; N-formimidoyl-L-glutamate from L-histidine: step 3/3. Its function is as follows. Catalyzes the hydrolytic cleavage of the carbon-nitrogen bond in imidazolone-5-propanoate to yield N-formimidoyl-L-glutamate. It is the third step in the universal histidine degradation pathway. This is Imidazolonepropionase from Bacillus cereus (strain ZK / E33L).